The primary structure comprises 262 residues: 1-(5-phosphoribosyl)-5-[(5-phosphoribosylamino)methylideneamino] imidazole-4-carboxamide isomerase (262 aa).

Catalysis depends on D8, which acts as the Proton acceptor. Catalysis depends on D130, which acts as the Proton donor.

The protein belongs to the HisA/HisF family.

It localises to the cytoplasm. The catalysed reaction is 1-(5-phospho-beta-D-ribosyl)-5-[(5-phospho-beta-D-ribosylamino)methylideneamino]imidazole-4-carboxamide = 5-[(5-phospho-1-deoxy-D-ribulos-1-ylimino)methylamino]-1-(5-phospho-beta-D-ribosyl)imidazole-4-carboxamide. The protein operates within amino-acid biosynthesis; L-histidine biosynthesis; L-histidine from 5-phospho-alpha-D-ribose 1-diphosphate: step 4/9. In Chloroherpeton thalassium (strain ATCC 35110 / GB-78), this protein is 1-(5-phosphoribosyl)-5-[(5-phosphoribosylamino)methylideneamino] imidazole-4-carboxamide isomerase.